A 297-amino-acid chain; its full sequence is Phosphatidylinositol transfer protein SFH5 (297 aa).

The region spanning 106–282 (DFEGLGYVTK…EYGGKGLSLG (177 aa)) is the CRAL-TRIO domain. Residues Tyr131, Arg151, His187, Tyr189, and Lys223 each coordinate heme.

The protein belongs to the SFH5 family. Requires heme b as cofactor.

It localises to the cytoplasm. Its subcellular location is the endoplasmic reticulum membrane. It is found in the microsome membrane. The catalysed reaction is a 1,2-diacyl-sn-glycero-3-phospho-(1D-myo-inositol)(in) = a 1,2-diacyl-sn-glycero-3-phospho-(1D-myo-inositol)(out). Functionally, non-classical phosphatidylinositol (PtdIns) transfer protein (PITP), which exhibits PtdIns-binding/transfer activity in the absence of detectable PtdCho-binding/transfer activity. Regulates PtdIns(4,5)P2 homeostasis at the plasma membrane. Heme-binding protein that may play a role in organic oxidant-induced stress responses. The chain is Phosphatidylinositol transfer protein SFH5 (SFH5) from Cryptococcus neoformans var. neoformans serotype D (strain B-3501A) (Filobasidiella neoformans).